Consider the following 369-residue polypeptide: Polycomb group protein FERTILIZATION-INDEPENDENT ENDOSPERM (369 aa).

7 WD repeats span residues 31–73 (EGKK…AISA), 81–123 (DKEE…IHKS), 126–166 (GHGD…CILI), 172–212 (GHRY…TYVE), 238–275 (IHTN…NSPG), 287–328 (VPMC…PVLI), and 335–368 (QSKS…DVIT).

This sequence belongs to the WD repeat ESC family. In terms of assembly, interacts directly with MEA. These two proteins are probably indirectly associated with FIS2. In plants, PcG complexes are probably composed of a member of the EZ family (CLF or MEA), FIE, and a member of the VEFS family (FIS2, VRN2 or EMF2). Component of the plant homeodomain / polycomb repressive complex 2 (PHD-PRC2) large complex during prolonged cold, composed of core PRC2 components (VRN2, EZA1, FIE and MSI1), and three related PHD finger proteins (VIL1, VIL2 and VIN3) that mediates histone H3 trimethylation on 'Lys-27' (H3K27me3). Binds to ALP1. Expressed in cauline leaves, root and stems. In the male reproductive organ, it is expressed in the developing anther; and is abundant in microspore mother cells, in microsporocytes and in the tapetum, but is absent from vascular bundles, the connective tissue and the filament. It is also absent from pollen grains at subsequent developmental stages. In the developing female reproductive organs, it is highly expressed in all cells of the young ovules primordium before archesporial differentiation. Then, it is highly expressed in the ovule sporophytic tissue and the megaspore mother cell before meiosis, but is absent from placenta or the developing carpel. Then, it decreases.

The protein localises to the nucleus. Polycomb group (PcG) protein. PcG proteins act by forming multiprotein complexes, which are required to maintain the transcriptionally repressive state of homeotic genes throughout development. PcG proteins are not required to initiate repression, but to maintain it during later stages of development. They probably act via the methylation of histones, rendering chromatin heritably changed in its expressibility. Required to prevent the proliferation of the central cell by repressing unknown target genes before fertilization. Probably also involved in floral repression mechanism established during early plant development. Regulates the anteroposterior organization of the endosperm. Interacts with the promoter and represses the transcription of genes such as PHE1, that are paternally active and maternally silenced. The polypeptide is Polycomb group protein FERTILIZATION-INDEPENDENT ENDOSPERM (FIE) (Arabidopsis thaliana (Mouse-ear cress)).